Consider the following 267-residue polypeptide: Phosphonates import ATP-binding protein PhnC 1 (267 aa).

Residues 3 to 247 (LSLDGVDLVH…ALDALYANEQ (245 aa)) form the ABC transporter domain. 36 to 43 (GPSGAGKT) lines the ATP pocket.

The protein belongs to the ABC transporter superfamily. Phosphonates importer (TC 3.A.1.9.1) family. In terms of assembly, the complex is composed of two ATP-binding proteins (PhnC), two transmembrane proteins (PhnE) and a solute-binding protein (PhnD).

It localises to the cell inner membrane. It catalyses the reaction phosphonate(out) + ATP + H2O = phosphonate(in) + ADP + phosphate + H(+). Its function is as follows. Part of the ABC transporter complex PhnCDE involved in phosphonates import. Responsible for energy coupling to the transport system. This is Phosphonates import ATP-binding protein PhnC 1 from Pseudomonas aeruginosa (strain ATCC 15692 / DSM 22644 / CIP 104116 / JCM 14847 / LMG 12228 / 1C / PRS 101 / PAO1).